Reading from the N-terminus, the 489-residue chain is GTPase Der (489 aa).

2 consecutive EngA-type G domains span residues 3–166 and 195–368; these read PVIA…PKDE and IKIA…KSAV. Residues 9–16, 56–60, 118–121, 201–208, 248–252, and 313–316 contribute to the GTP site; these read GRPNVGKS, DTGGI, NKID, DTAGV, and NKWD. The KH-like domain maps to 369 to 453; that stretch reads TRWPTSRLTQ…PIRIEFKGGE (85 aa). Positions 451–489 are disordered; the sequence is GGENPYEGNKNTLTDRQVNKKRRMMSHHKKADKKRRDKR. Residues 469–489 show a composition bias toward basic residues; it reads NKKRRMMSHHKKADKKRRDKR.

It belongs to the TRAFAC class TrmE-Era-EngA-EngB-Septin-like GTPase superfamily. EngA (Der) GTPase family. Associates with the 50S ribosomal subunit.

In terms of biological role, GTPase that plays an essential role in the late steps of ribosome biogenesis. The chain is GTPase Der from Pseudomonas syringae pv. tomato (strain ATCC BAA-871 / DC3000).